The chain runs to 517 residues: Sugar transport protein MST1 (517 aa).

At 1–25 (MAGGVIVANDGDGSAVDHGGRLTFS) the chain is on the cytoplasmic side. Residues 26–46 (VVITCLVAASGGLIFGYDVGI) traverse the membrane as a helical segment. Residues 47–83 (SGGVSTMEPFLRRFFPGVVRRMAEARPGNEYCVYDSQ) are Extracellular-facing. The chain crosses the membrane as a helical span at residues 84–104 (ALTAFTSSLYVAGLVASLVAS). The Cytoplasmic segment spans residues 105–120 (RVTRAMGRQAVMVMGG). A helical transmembrane segment spans residues 121 to 141 (ALFFAGGAVTGFAVNIAMLIV). Residues 142 to 143 (GR) are Extracellular-facing. Residues 144 to 164 (MLLGFGVGFTNQAAPLFLAEM) traverse the membrane as a helical segment. At 165–170 (APTRWR) the chain is on the cytoplasmic side. Residues 171–191 (GSLTAGFQFFLAVGVVIATVT) form a helical membrane-spanning segment. Topologically, residues 192–203 (NYFASRVPWGWR) are extracellular. The helical transmembrane segment at 204-224 (LSLGLAGAPAVVIFLGALFLT) threads the bilayer. Topologically, residues 225 to 288 (DTPSSLVMRG…AARREYRPYL (64 aa)) are cytoplasmic. A helical transmembrane segment spans residues 289 to 309 (VFAVAMPMFFQLTGVIVISFF). The Extracellular segment spans residues 310 to 325 (SPLVFRTVGFGSNAAL). The chain crosses the membrane as a helical span at residues 326–346 (MGNVILGAVNLVCLMLSTLVI). At 347 to 352 (DRYGRK) the chain is on the cytoplasmic side. Residues 353–373 (VLFMVGGAIMIIAQVGVAWIM) traverse the membrane as a helical segment. Residues 374–389 (GAQVGKNGSEAMARPY) lie on the Extracellular side of the membrane. A helical membrane pass occupies residues 390–410 (AVAVVAFTCLHTAGFGWSWGP). At 411-430 (LGWVIPGEIFPVDIRSAGQA) the chain is on the cytoplasmic side. Residues 431–451 (MNVSIGLGLTFVQTQSFLAML) form a helical membrane-spanning segment. The Extracellular segment spans residues 452–456 (CRFRY). A helical transmembrane segment spans residues 457–477 (GTFAYYAAWVAVMTVFIAVFL). At 478-517 (PETKGVPLESMATVWARHWYWKRFAREQPKTSADEPTGTY) the chain is on the cytoplasmic side.

The protein belongs to the major facilitator superfamily. Sugar transporter (TC 2.A.1.1) family.

It is found in the membrane. In terms of biological role, mediates active uptake of hexoses by sugar:proton symport. The chain is Sugar transport protein MST1 from Oryza sativa subsp. japonica (Rice).